The primary structure comprises 343 residues: Aspartate carbamoyltransferase catalytic subunit (343 aa).

Arg91 and Thr92 together coordinate carbamoyl phosphate. Residue Lys119 participates in L-aspartate binding. The carbamoyl phosphate site is built by Arg141, His171, and Gln174. L-aspartate-binding residues include Arg204 and Arg259. Carbamoyl phosphate is bound by residues Gly300 and Pro301.

The protein belongs to the aspartate/ornithine carbamoyltransferase superfamily. ATCase family. Heterododecamer (2C3:3R2) of six catalytic PyrB chains organized as two trimers (C3), and six regulatory PyrI chains organized as three dimers (R2).

The enzyme catalyses carbamoyl phosphate + L-aspartate = N-carbamoyl-L-aspartate + phosphate + H(+). It participates in pyrimidine metabolism; UMP biosynthesis via de novo pathway; (S)-dihydroorotate from bicarbonate: step 2/3. Functionally, catalyzes the condensation of carbamoyl phosphate and aspartate to form carbamoyl aspartate and inorganic phosphate, the committed step in the de novo pyrimidine nucleotide biosynthesis pathway. The sequence is that of Aspartate carbamoyltransferase catalytic subunit from Burkholderia multivorans (strain ATCC 17616 / 249).